Reading from the N-terminus, the 106-residue chain is MAARIKKGDQVLVLSGKSRGVRGEVLAVMPKAEKAVVRGVAVAKRHTKPNRMGGEGGIIEREMPIHLSNLKLVDPKSGKPTRVGFRILEDGRKVRVAKATGEVIEG.

The protein belongs to the universal ribosomal protein uL24 family. In terms of assembly, part of the 50S ribosomal subunit.

One of two assembly initiator proteins, it binds directly to the 5'-end of the 23S rRNA, where it nucleates assembly of the 50S subunit. Its function is as follows. One of the proteins that surrounds the polypeptide exit tunnel on the outside of the subunit. The protein is Large ribosomal subunit protein uL24 of Gluconobacter oxydans (strain 621H) (Gluconobacter suboxydans).